Consider the following 60-residue polypeptide: Large ribosomal subunit protein bL32 (60 aa).

The segment at 1–25 (MAVQQNKKSPSKRGMHRSHNALNVP) is disordered. The span at 9 to 19 (SPSKRGMHRSH) shows a compositional bias: basic residues.

It belongs to the bacterial ribosomal protein bL32 family.

This chain is Large ribosomal subunit protein bL32, found in Polaromonas naphthalenivorans (strain CJ2).